The sequence spans 276 residues: MRVLETIATLREYRKSLKESVGFVPTMGALHRGHQSLIERSLKENSHTIVSVFVNPTQFGANEDFSAYPRPLEKDLALCEKLGVSAVFAPKIGEMYPYEIEQRLKLYAPTFLSHSLEGAARKGHFDGVVQVVLRLFHLTNPTRAYFGKKDVQQLLIVQHLVQDLLLDIEIVPCEIVRDSDHLALSSRNVYLNATERKQALAIPKALENIKQAIDKGEKACEKLKKLGLEILETLEVDYLEFCNHKLEPLKTIEPTNTLILVAARVGKTRLLDNLWV.

27 to 34 (MGALHRGH) provides a ligand contact to ATP. The active-site Proton donor is the His-34. Gln-58 contributes to the (R)-pantoate binding site. Residue Gln-58 participates in beta-alanine binding. 147 to 150 (GKKD) lines the ATP pocket. Position 153 (Gln-153) interacts with (R)-pantoate. Residues Val-176 and 184 to 187 (LSSR) contribute to the ATP site.

Belongs to the pantothenate synthetase family. In terms of assembly, homodimer.

It localises to the cytoplasm. The catalysed reaction is (R)-pantoate + beta-alanine + ATP = (R)-pantothenate + AMP + diphosphate + H(+). It participates in cofactor biosynthesis; (R)-pantothenate biosynthesis; (R)-pantothenate from (R)-pantoate and beta-alanine: step 1/1. Its function is as follows. Catalyzes the condensation of pantoate with beta-alanine in an ATP-dependent reaction via a pantoyl-adenylate intermediate. The protein is Pantothenate synthetase of Helicobacter pylori (strain G27).